Reading from the N-terminus, the 779-residue chain is Phosphoribosylformylglycinamidine synthase subunit PurL (779 aa).

His52 is a catalytic residue. Residues Tyr55 and Lys94 each contribute to the ATP site. Glu96 lines the Mg(2+) pocket. Substrate contacts are provided by residues 97–100 and Arg119; that span reads SHNH. His98 functions as the Proton acceptor in the catalytic mechanism. Position 120 (Asp120) interacts with Mg(2+). Gln243 serves as a coordination point for substrate. Asp271 is a binding site for Mg(2+). 315–317 serves as a coordination point for substrate; it reads ESQ. Residues Asn523 and Gly560 each contribute to the ATP site. Asn561 provides a ligand contact to Mg(2+). Ser563 is a binding site for substrate.

Belongs to the FGAMS family. As to quaternary structure, monomer. Part of the FGAM synthase complex composed of 1 PurL, 1 PurQ and 2 PurS subunits.

The protein localises to the cytoplasm. The enzyme catalyses N(2)-formyl-N(1)-(5-phospho-beta-D-ribosyl)glycinamide + L-glutamine + ATP + H2O = 2-formamido-N(1)-(5-O-phospho-beta-D-ribosyl)acetamidine + L-glutamate + ADP + phosphate + H(+). It functions in the pathway purine metabolism; IMP biosynthesis via de novo pathway; 5-amino-1-(5-phospho-D-ribosyl)imidazole from N(2)-formyl-N(1)-(5-phospho-D-ribosyl)glycinamide: step 1/2. Its function is as follows. Part of the phosphoribosylformylglycinamidine synthase complex involved in the purines biosynthetic pathway. Catalyzes the ATP-dependent conversion of formylglycinamide ribonucleotide (FGAR) and glutamine to yield formylglycinamidine ribonucleotide (FGAM) and glutamate. The FGAM synthase complex is composed of three subunits. PurQ produces an ammonia molecule by converting glutamine to glutamate. PurL transfers the ammonia molecule to FGAR to form FGAM in an ATP-dependent manner. PurS interacts with PurQ and PurL and is thought to assist in the transfer of the ammonia molecule from PurQ to PurL. The chain is Phosphoribosylformylglycinamidine synthase subunit PurL from Prochlorococcus marinus (strain AS9601).